The sequence spans 292 residues: 1,4-dihydroxy-2-naphthoate octaprenyltransferase (292 aa).

A run of 6 helical transmembrane segments spans residues 35–55 (AAVW…VIGV), 101–121 (ALAG…VGAI), 137–157 (GYAG…AVLG), 166–186 (VDWV…SVLV), 220–240 (LLAV…WCVV), and 271–291 (TGLA…FGQL).

This sequence belongs to the MenA family. Type 1 subfamily. Mg(2+) serves as cofactor.

The protein resides in the cell membrane. The enzyme catalyses an all-trans-polyprenyl diphosphate + 1,4-dihydroxy-2-naphthoate + H(+) = a 2-demethylmenaquinol + CO2 + diphosphate. It functions in the pathway quinol/quinone metabolism; menaquinone biosynthesis; menaquinol from 1,4-dihydroxy-2-naphthoate: step 1/2. Activity is abolished by EDTA. Inhibited by Ro 48-8071, which is non-competitive with regard to DHNA and competitive with regard to the isoprenyldiphosphate substrate. Functionally, conversion of 1,4-dihydroxy-2-naphthoate (DHNA) to demethylmenaquinone (DMK). Can use a variety of allylic isoprenyl diphosphates as substrates but has a requirement for at least three isoprene units. The sequence is that of 1,4-dihydroxy-2-naphthoate octaprenyltransferase from Mycobacterium tuberculosis (strain ATCC 25618 / H37Rv).